Reading from the N-terminus, the 231-residue chain is Cytochrome c oxidase assembly factor 7A (231 aa).

5 Sel1-like repeats span residues 34–66, 68–104, 108–145, 146–182, and 183–218; these read PDGC…DQNE, SESF…NKGG, IDSC…DGNF, AASC…SLGH, and VWGC…DLHK.

The protein belongs to the hcp beta-lactamase family.

It is found in the mitochondrion intermembrane space. May be required for assembly of mitochondrial respiratory chain complexes. The sequence is that of Cytochrome c oxidase assembly factor 7A (coa7-a) from Xenopus laevis (African clawed frog).